We begin with the raw amino-acid sequence, 176 residues long: Prepronociceptin (176 aa).

A signal peptide spans 1–19 (MKVLLCDLLLLSLFSSVFS). 2 propeptides span residues 20–95 (SCQR…MQHL) and 169–176 (TLHQNGNV).

Belongs to the opioid neuropeptide precursor family. Specific enzymatic cleavages at paired basic residues probably yield other active peptides besides nociceptin. In terms of processing, the N-terminal domain contains 6 conserved cysteines thought to be involved in disulfide bonding and/or processing. Predominantly expressed in the brain and spinal cord. Also expressed and secreted by peripheral blood neutrophils following degranulation.

Its subcellular location is the secreted. Functionally, ligand of the opioid receptor-like receptor OPRL1. It may act as a transmitter in the brain by modulating nociceptive and locomotor behavior. May be involved in neuronal differentiation and development. Blocks nociceptin action in pain transmission by inhibiting nociceptin-induced hyperalgesia and allodynia. In terms of biological role, has potent analgesic activity. This is Prepronociceptin (PNOC) from Homo sapiens (Human).